The following is a 298-amino-acid chain: Tyrosine recombinase XerC (298 aa).

Residues Thr-2–Val-88 enclose the Core-binding (CB) domain. Residues His-109–Asp-288 form the Tyr recombinase domain. Catalysis depends on residues Arg-148, Lys-172, His-240, Arg-243, and His-266. Tyr-275 acts as the O-(3'-phospho-DNA)-tyrosine intermediate in catalysis.

This sequence belongs to the 'phage' integrase family. XerC subfamily. Forms a cyclic heterotetrameric complex composed of two molecules of XerC and two molecules of XerD, in which XerC interacts with XerD via its C-terminal region, XerD interacts with XerC via its C-terminal region and so on.

It localises to the cytoplasm. FtsK may regulate the catalytic switch between XerC and XerD in the heterotetrameric complex during the two steps of the recombination process. Site-specific tyrosine recombinase, which acts by catalyzing the cutting and rejoining of the recombining DNA molecules. Binds cooperatively to specific DNA consensus sequences that are separated from XerD binding sites by a short central region, forming the heterotetrameric XerC-XerD complex that recombines DNA substrates. The complex is essential to convert dimers of the bacterial chromosome into monomers to permit their segregation at cell division. It also contributes to the segregational stability of plasmids. In the complex XerC specifically exchanges the top DNA strands. The chain is Tyrosine recombinase XerC from Shigella dysenteriae serotype 1 (strain Sd197).